An 847-amino-acid chain; its full sequence is uncharacterized protein (847 aa).

Residues 116–126 show a composition bias toward polar residues; that stretch reads TGSSELTTSKT. Disordered regions lie at residues 116 to 153, 208 to 245, and 361 to 392; these read TGSS…TPIE, LKNF…RLSP, and DLEK…SNVI. The span at 128–145 shows a compositional bias: basic and acidic residues; the sequence is IDVDTKEQENRLKQKAEA. Polar residues predominate over residues 368–378; that stretch reads SSSASLSTNKL.

This is an uncharacterized protein from Caenorhabditis elegans.